The primary structure comprises 843 residues: Toll-like receptor 4 (843 aa).

Residues 1 to 23 (MMPPTRLAGTLIPAMAFLSCLRP) form the signal peptide. An LRRNT domain is found at 24-54 (ESWDPCVQVVPNTTYQCMDLNLYKIPENIPT). The Extracellular portion of the chain corresponds to 24–633 (ESWDPCVQVV…FNNATCQISK (610 aa)). Cys29 and Cys40 are disulfide-bonded. A glycan (N-linked (GlcNAc...) asparagine) is linked at Asn35. 8 LRR repeats span residues 55–76 (STKELDLSFNPLKELGSHSFSN), 79–100 (ELQVLDLSRCEIEMIEDDAYQG), 103–124 (HLSTLILTGNPIRSLALGAFSG), 127–148 (SLQTLVAVETKLSSLEKFPIGH), 151–172 (TLKELNVAHNLIHSFKLPEYFS), 176–197 (NLEHLDLSNNKIQNISHEDLRV), 205–225 (NLSLDLSLNPLEFIQPDAFKE), and 227–247 (KLHKLTLRSNFDSIDVMKSCI). 2 N-linked (GlcNAc...) asparagine glycosylation sites follow: Asn189 and Asn205. N-linked (GlcNAc...) asparagine glycans are attached at residues Asn282 and Asn295. LRR repeat units follow at residues 353–374 (SLKRLVFTSNKDMKSFNEVKLP), 375–398 (SLEFLDLSRNRLSFKSCCSEADLK), 401–423 (RLKHLDLSFNDVISMSSNFMGLE), 424–445 (QLEHLDFQHSTLKQASDFPVFL), 449–459 (NLRYLDISYTN), 473–496 (SLQVLKMAGNSFKDNFLPNIFREM), 498–519 (NLTTLDLSKCNLEQVSQEAFCL), 522–543 (RLRVLNMSHNNLLFLDMLPYKP), and 546–569 (SLQILDCSFNRIVAFKWQELQHFP). Cys391 and Cys392 are joined by a disulfide. N-linked (GlcNAc...) asparagine glycosylation is found at Asn498 and Asn527. N-linked (GlcNAc...) asparagine glycosylation occurs at Asn576. The LRRCT domain maps to 580 to 631 (NDFACVCEYQSFLQWVKDQRQLLVEVEHLVCAIPLQMRGMPVLGFNNATCQI). 2 disulfides stabilise this stretch: Cys584/Cys610 and Cys586/Cys629. Asn626 is a glycosylation site (N-linked (GlcNAc...) asparagine). A helical membrane pass occupies residues 634 to 654 (TIVGGSVFSILMVSVIAVLVY). Topologically, residues 655-843 (KFYFHLMLLA…SRQHDAETST (189 aa)) are cytoplasmic. The TIR domain occupies 674 to 817 (SIYDAFVIYS…IFWRRLRKAL (144 aa)). Positions 824–843 (SPAGTADAAESRQHDAETST) are disordered. Residues 832-843 (AESRQHDAETST) are compositionally biased toward basic and acidic residues.

This sequence belongs to the Toll-like receptor family. Belongs to the lipopolysaccharide (LPS) receptor, a multi-protein complex containing at least CD14, LY96 and TLR4. Binding to bacterial LPS leads to homodimerization. Interacts with LY96 via the extracellular domain. Interacts with MYD88 and TIRAP via their respective TIR domains. Interacts with NOX4. Interacts with CNPY3 and HSP90B1; this interaction is required for proper folding in the endoplasmic reticulum. Interacts with MAP3K21; this interaction leads to negative regulation of TLR4 signaling. Interacts with CD36, following CD36 stimulation by oxLDL or amyloid-beta 42, and forms a heterodimer with TLR6. The trimeric complex is internalized and triggers inflammatory response. LYN kinase activity facilitates TLR4-TLR6 heterodimerization and signal initiation. Interacts with TICAM1 in response to LPS in a WDFY1-dependent manner. Interacts with WDFY1 in response to LPS. Interacts with SMPDL3B. Interacts with CEACAM1; upon lipopolysaccharide stimulation, forms a complex including TLR4 and the phosphorylated form of SYK and CEACAM1, which in turn, recruits PTPN6 that dephosphorylates SYK, reducing the production of reactive oxygen species (ROS) and lysosome disruption, which in turn, reduces the activity of the inflammasome. Interacts with RFTN1; the interaction occurs in response to lipopolysaccharide stimulation. Interacts with SCIMP; the interaction occurs in response to lipopolysaccharide stimulation and is enhanced by phosphorylation of SCIMP by LYN. This interaction facilitates the phosphorylation of TLR4 by LYN which elicits a selective cytokine response in macrophages. Interacts with TRAF3IP3. Interacts with TREM1; this interaction enhances TLR4-mediated inflammatory response. Interacts with ZG16B/PAUF. Interacts with CD82; this interaction inhibits TLR4-mediated signaling pathway. Post-translationally, phosphorylated on tyrosine residues by LYN after binding lipopolysaccharide. Ubiquitinated by RNF128 via 'Lys-28'-linked polyubiquitin chains, leading to proteasomal degradation.

It is found in the cell membrane. The protein localises to the early endosome. The protein resides in the cell projection. Its subcellular location is the ruffle. Transmembrane receptor that functions as a pattern recognition receptor recognizing pathogen- and damage-associated molecular patterns (PAMPs and DAMPs) to induce innate immune responses via downstream signaling pathways. At the plasma membrane, cooperates with LY96 to mediate the innate immune response to bacterial lipopolysaccharide (LPS). Also involved in LPS-independent inflammatory responses triggered by free fatty acids, such as palmitate, and Ni(2+). Mechanistically, acts via MYD88, TIRAP and TRAF6, leading to NF-kappa-B activation, cytokine secretion and the inflammatory response. Alternatively, CD14-mediated TLR4 internalization via endocytosis is associated with the initiation of a MYD88-independent signaling via the TICAM1-TBK1-IRF3 axis leading to type I interferon production. In addition to the secretion of proinflammatory cytokines, initiates the activation of NLRP3 inflammasome and formation of a positive feedback loop between autophagy and NF-kappa-B signaling cascade. In complex with TLR6, promotes inflammation in monocytes/macrophages by associating with TLR6 and the receptor CD86. Upon ligand binding, such as oxLDL or amyloid-beta 42, the TLR4:TLR6 complex is internalized and triggers inflammatory response, leading to NF-kappa-B-dependent production of CXCL1, CXCL2 and CCL9 cytokines, via MYD88 signaling pathway, and CCL5 cytokine, via TICAM1 signaling pathway. In myeloid dendritic cells, vesicular stomatitis virus glycoprotein G but not LPS promotes the activation of IRF7, leading to type I IFN production in a CD14-dependent manner. This chain is Toll-like receptor 4 (TLR4), found in Equus caballus (Horse).